The following is an 894-amino-acid chain: Leucine--tRNA ligase, mitochondrial (894 aa).

Residues 1–9 constitute a mitochondrion transit peptide; sequence MLPRPSSRF. The 'HIGH' region motif lies at 56–66; that stretch reads PYPSGVLHIGH. The 'KMSKS' region motif lies at 646–650; it reads KMSKS. Lys649 serves as a coordination point for ATP.

This sequence belongs to the class-I aminoacyl-tRNA synthetase family.

The protein resides in the mitochondrion matrix. The catalysed reaction is tRNA(Leu) + L-leucine + ATP = L-leucyl-tRNA(Leu) + AMP + diphosphate. This chain is Leucine--tRNA ligase, mitochondrial (NAM2), found in Saccharomyces paradoxus (Yeast).